We begin with the raw amino-acid sequence, 89 residues long: Small ribosomal subunit protein uS19 (89 aa).

It belongs to the universal ribosomal protein uS19 family.

Functionally, protein S19 forms a complex with S13 that binds strongly to the 16S ribosomal RNA. In Bacteroides thetaiotaomicron (strain ATCC 29148 / DSM 2079 / JCM 5827 / CCUG 10774 / NCTC 10582 / VPI-5482 / E50), this protein is Small ribosomal subunit protein uS19.